Reading from the N-terminus, the 136-residue chain is Phospholipase A2 (136 aa).

3 residues coordinate Ca(2+): Trp8, Gly10, and Gly12. Disulfide bonds link Cys9-Cys31, Cys30-Cys70, Cys37-Cys63, Cys61-Cys95, and Cys105-Cys115. Asn16 is a glycosylation site (N-linked (GlcNAc...) asparagine). Residue His34 is part of the active site. Asp35 contacts Ca(2+). Asp64 is a catalytic residue.

This sequence belongs to the phospholipase A2 family. The cofactor is Ca(2+). Expressed by the venom gland.

It localises to the secreted. The enzyme catalyses a 1,2-diacyl-sn-glycero-3-phosphocholine + H2O = a 1-acyl-sn-glycero-3-phosphocholine + a fatty acid + H(+). In terms of biological role, PLA2 catalyzes the calcium-dependent hydrolysis of the 2-acyl groups in 3-sn-phosphoglycerides. This is Phospholipase A2 from Bombus pensylvanicus (American bumblebee).